Consider the following 519-residue polypeptide: Bifunctional pantoate ligase/cytidylate kinase (519 aa).

The pantoate--beta-alanine ligase stretch occupies residues 1 to 282 (MNLTILRTKT…CGNTRLIDHG (282 aa)). Residue 30 to 37 (MGGLHQGH) coordinates ATP. H37 acts as the Proton donor in catalysis. Residue Q66 participates in (R)-pantoate binding. A beta-alanine-binding site is contributed by Q66. Position 155 to 158 (155 to 158 (GEKD)) interacts with ATP. Q161 serves as a coordination point for (R)-pantoate. Residue 192–195 (CSSR) participates in ATP binding. Positions 283 to 519 (FLMKRNPIVA…PQEVWPTNAT (237 aa)) are cytidylate kinase.

The protein in the N-terminal section; belongs to the pantothenate synthetase family. In the C-terminal section; belongs to the cytidylate kinase family. Type 1 subfamily.

Its subcellular location is the cytoplasm. The catalysed reaction is (R)-pantoate + beta-alanine + ATP = (R)-pantothenate + AMP + diphosphate + H(+). It catalyses the reaction CMP + ATP = CDP + ADP. It carries out the reaction dCMP + ATP = dCDP + ADP. Its pathway is cofactor biosynthesis; (R)-pantothenate biosynthesis; (R)-pantothenate from (R)-pantoate and beta-alanine: step 1/1. Functionally, catalyzes the condensation of pantoate with beta-alanine in an ATP-dependent reaction via a pantoyl-adenylate intermediate. Its function is as follows. Catalyzes the transfer of a phosphate group from ATP to either CMP or dCMP to form CDP or dCDP and ADP, respectively. The protein is Bifunctional pantoate ligase/cytidylate kinase of Prochlorococcus marinus (strain SARG / CCMP1375 / SS120).